The sequence spans 446 residues: Maltoporin (446 aa).

Residues 1–25 (MMITLRKLPLAVAVAAGVMSAQAMA) form the signal peptide.

Belongs to the porin LamB (TC 1.B.3) family. As to quaternary structure, homotrimer formed of three 18-stranded antiparallel beta-barrels, containing three independent channels.

It is found in the cell outer membrane. It carries out the reaction beta-maltose(in) = beta-maltose(out). Involved in the transport of maltose and maltodextrins. This is Maltoporin from Escherichia coli (strain K12 / MC4100 / BW2952).